The primary structure comprises 116 residues: Hydrogenase maturation factor HypA (116 aa).

Residue histidine 2 participates in Ni(2+) binding. The Zn(2+) site is built by cysteine 73, cysteine 76, cysteine 90, and cysteine 93.

This sequence belongs to the HypA/HybF family.

In terms of biological role, involved in the maturation of [NiFe] hydrogenases. Required for nickel insertion into the metal center of the hydrogenase. In Escherichia coli O157:H7, this protein is Hydrogenase maturation factor HypA.